We begin with the raw amino-acid sequence, 266 residues long: Elongator complex protein 6 (266 aa).

Belongs to the ELP6 family. Component of the elongator complex which consists of ELP1, ELP2, ELP3, ELP4, ELP5 and ELP6.

The protein resides in the cytoplasm. It is found in the nucleus. It functions in the pathway tRNA modification; 5-methoxycarbonylmethyl-2-thiouridine-tRNA biosynthesis. Functionally, component of the elongator complex which is required for multiple tRNA modifications, including mcm5U (5-methoxycarbonylmethyl uridine), mcm5s2U (5-methoxycarbonylmethyl-2-thiouridine), and ncm5U (5-carbamoylmethyl uridine). The elongator complex catalyzes formation of carboxymethyluridine in the wobble base at position 34 in tRNAs. Involved in cell migration. This chain is Elongator complex protein 6, found in Homo sapiens (Human).